The primary structure comprises 842 residues: Elongation factor 2 (842 aa).

One can recognise a tr-type G domain in the interval Thr17 to Lys253. GTP-binding positions include Ala26–Ser33, Asn158–Asp161, and Ser213–Leu215. The residue at position 699 (His699) is a Diphthamide.

The protein belongs to the TRAFAC class translation factor GTPase superfamily. Classic translation factor GTPase family. EF-G/EF-2 subfamily.

It localises to the cytoplasm. It carries out the reaction GTP + H2O = GDP + phosphate + H(+). Catalyzes the GTP-dependent ribosomal translocation step during translation elongation. During this step, the ribosome changes from the pre-translocational (PRE) to the post-translocational (POST) state as the newly formed A-site-bound peptidyl-tRNA and P-site-bound deacylated tRNA move to the P and E sites, respectively. Catalyzes the coordinated movement of the two tRNA molecules, the mRNA and conformational changes in the ribosome. This chain is Elongation factor 2 (EFT1), found in Kluyveromyces lactis (strain ATCC 8585 / CBS 2359 / DSM 70799 / NBRC 1267 / NRRL Y-1140 / WM37) (Yeast).